Reading from the N-terminus, the 541-residue chain is Malate synthase (541 aa).

R172 (proton acceptor) is an active-site residue. Residue D452 is the Proton donor of the active site.

Belongs to the malate synthase family.

The protein localises to the cytoplasm. It catalyses the reaction glyoxylate + acetyl-CoA + H2O = (S)-malate + CoA + H(+). It functions in the pathway carbohydrate metabolism; glyoxylate cycle; (S)-malate from isocitrate: step 2/2. The polypeptide is Malate synthase (mls) (Myxococcus xanthus (strain DK1622)).